A 400-amino-acid polypeptide reads, in one-letter code: Glycine betaine/proline betaine transport system ATP-binding protein ProV (400 aa).

The ABC transporter domain occupies 29–265 (LSKEQILEKT…PANDYVRTFF (237 aa)). 61–68 (GLSGSGKS) is an ATP binding site. 2 consecutive CBS domains span residues 282–341 (RTPN…GLDA) and 343–400 (LIDA…VNNG).

The protein belongs to the ABC transporter superfamily. In terms of assembly, the complex is composed of two ATP-binding proteins (ProV), two transmembrane proteins (ProW) and a solute-binding protein (ProX).

It localises to the cell inner membrane. Its function is as follows. Part of the ProU ABC transporter complex involved in glycine betaine and proline betaine uptake. Probably responsible for energy coupling to the transport system. The sequence is that of Glycine betaine/proline betaine transport system ATP-binding protein ProV from Escherichia coli (strain K12).